Consider the following 356-residue polypeptide: GTPase Obg (356 aa).

Positions 1–159 constitute an Obg domain; the sequence is MKFLDQAKVY…RWIWLRLKLI (159 aa). An OBG-type G domain is found at 160–328; it reads ADAGLVGLPN…ALYAIAQHLG (169 aa). GTP-binding positions include 166 to 173, 191 to 195, 213 to 216, 280 to 283, and 309 to 311; these read GLPNAGKS, FTTLH, DIPG, NKID, and SGV. Ser173 and Thr193 together coordinate Mg(2+). Residues 333–356 are disordered; that stretch reads DIPLPKPSNADEEDPDTDQPWSPV.

This sequence belongs to the TRAFAC class OBG-HflX-like GTPase superfamily. OBG GTPase family. In terms of assembly, monomer. The cofactor is Mg(2+).

It is found in the cytoplasm. Functionally, an essential GTPase which binds GTP, GDP and possibly (p)ppGpp with moderate affinity, with high nucleotide exchange rates and a fairly low GTP hydrolysis rate. Plays a role in control of the cell cycle, stress response, ribosome biogenesis and in those bacteria that undergo differentiation, in morphogenesis control. The chain is GTPase Obg from Hyphomonas neptunium (strain ATCC 15444).